The chain runs to 333 residues: Dihydroorotate dehydrogenase (quinone) (333 aa).

FMN is bound by residues 56-60 and Thr-80; that span reads AGLDK. Lys-60 provides a ligand contact to substrate. Residue 105–109 coordinates substrate; it reads NRMGF. Residues Asn-133 and Asn-166 each contribute to the FMN site. Residue Asn-166 coordinates substrate. Residue Ser-169 is the Nucleophile of the active site. Substrate is bound at residue Asn-171. FMN contacts are provided by Lys-211 and Thr-239. Residue 240-241 coordinates substrate; sequence NT. FMN contacts are provided by residues Gly-262, Gly-291, and 312–313; that span reads YS.

It belongs to the dihydroorotate dehydrogenase family. Type 2 subfamily. In terms of assembly, monomer. It depends on FMN as a cofactor.

The protein localises to the cell membrane. The catalysed reaction is (S)-dihydroorotate + a quinone = orotate + a quinol. It participates in pyrimidine metabolism; UMP biosynthesis via de novo pathway; orotate from (S)-dihydroorotate (quinone route): step 1/1. Its function is as follows. Catalyzes the conversion of dihydroorotate to orotate with quinone as electron acceptor. The protein is Dihydroorotate dehydrogenase (quinone) of Legionella pneumophila (strain Lens).